We begin with the raw amino-acid sequence, 1237 residues long: U3 small nucleolar RNA-associated protein 22 (1237 aa).

Residues 1-78 (MATSVKRKAS…TNTAATRHNG (78 aa)) form a disordered region. 2 positions are modified to phosphoserine: S10 and S58. T60 is modified (phosphothreonine). The segment covering 61–78 (SPESNEVATNTAATRHNG) has biased composition (polar residues). Residue S64 is modified to Phosphoserine.

It belongs to the NRAP family. Interacts with snoRNA U3. Interacts with MPP10. Component of the ribosomal small subunit (SSU) processome composed of at least 40 protein subunits and snoRNA U3. Interacts with UBP10.

Its subcellular location is the nucleus. The protein localises to the nucleolus. Functionally, involved in nucleolar processing of pre-18S ribosomal RNA and ribosome assembly. In Saccharomyces cerevisiae (strain ATCC 204508 / S288c) (Baker's yeast), this protein is U3 small nucleolar RNA-associated protein 22 (UTP22).